Reading from the N-terminus, the 693-residue chain is MSALQIQNVNWQVPMNRRAHHTDKFSSQDSIVRRGQPWEIILVCNRSLESGEDLNFIVSTGPQPSESARTKAVFSISGRSTGGWNAALKANSGNNLAIAIASPVSAPIGLYTLSVEISSRGRASSLKLGTFIMLFNPWLQADDVFMSNHAERQEYVEEDSGIIYVGSTNRIGMVGWNFGQFEEDILNISLSILDRSLNFRRDPVTDVARRNDPKYVCRVLSAMINGNDDNGVISGNWSGNYTGGVDPRTWNGSVEILKNWKKSGFRPVQFGQCWVFAGTLNTVLRCLGVPSRVITNFNSAHDTDRNLSVDVYYDAMGNPLEKGSDSVWNFHVWNEGWFVRTDLGPTYNGWQVLDATPQERSQGVFQCGPASVNAIKAGDVDRNFDMIFIFAEVNADRITWIYNNRNNTQKQNSVDTHSIGKYISTKAVGSNSRMDVTDKYKYPEGSSEERQVHQKALDKLKPNASFGATSSRNPEGEDKEPSISGKFKVTGILAVGKEVSLSLMLKNMTNDRKTVTMNMTAWTIVYNGTLVHEVWKDSATISLDPEEEIQYPVKIAYSQYERYLKADNMIRITAVCKVPDEAEVVVERDVILDNPALTLEVLEQAHVRKPVNVQMLFSNPLDQPVNNCVLLVEGSGLLRGSLKIDVPSLRPKEKSRIRFEIFPTRSGTKQLLADFSCNKFPAIKAMLPIDVSE.

Y111 is subject to Phosphotyrosine. The residue at position 112 (T112) is a Phosphothreonine. Residues A222, N225, N227, D228, and N230 each contribute to the Ca(2+) site. C273 is a catalytic residue. Ca(2+)-binding residues include D302, D304, N306, S308, and D325. Catalysis depends on residues H331 and D354. Ca(2+) is bound by residues N394, T416, E444, and E449. Residues 457–483 form a disordered region; that stretch reads LDKLKPNASFGATSSRNPEGEDKEPSI.

Belongs to the transglutaminase superfamily. Transglutaminase family. Consists of two polypeptide chains, which are synthesized as a precursor form of a single polypeptide. Requires Ca(2+) as cofactor. Post-translationally, activated by proteolytic processing. In vitro activation is commonly achieved by cleavage with dispase, a neutral bacterial protease. Physiological activation may be catalyzed by CTSL and, to a lesser extent, by CTSS. In terms of tissue distribution, expressed in skin and stomach and, at lower levels, in testis, kidney and spleen (at protein level). On the basis of its catalytic activity, detected in the epidermis, around the granular and spinous layers but not in the outermost cornified layers. In hair follicles, mainly located in the medulla and the hair cortex.

The protein resides in the cytoplasm. It carries out the reaction L-glutaminyl-[protein] + L-lysyl-[protein] = [protein]-L-lysyl-N(6)-5-L-glutamyl-[protein] + NH4(+). In terms of biological role, catalyzes the calcium-dependent formation of isopeptide cross-links between glutamine and lysine residues in various proteins, as well as the conjugation of polyamines to proteins. Involved in the formation of the cornified envelope (CE), a specialized component consisting of covalent cross-links of proteins beneath the plasma membrane of terminally differentiated keratinocytes. Catalyzes small proline-rich proteins (SPRR1 and SPRR2) and LOR cross-linking to form small interchain oligomers, which are further cross-linked by TGM1 onto the growing CE scaffold. In hair follicles, involved in cross-linking structural proteins to hardening the inner root sheath. This chain is Protein-glutamine gamma-glutamyltransferase E (Tgm3), found in Mus musculus (Mouse).